The sequence spans 154 residues: Snaclec EMS16 subunit beta (154 aa).

A signal peptide spans 1–26 (MGRLISVRFSLLVVFLSLSGIGAGLC). An intrachain disulfide couples cysteine 27 to cysteine 38. One can recognise a C-type lectin domain in the interval 34-147 (FDQHCYKVFE…CEKSVSFVCK (114 aa)). A glycan (N-linked (GlcNAc...) asparagine) is linked at asparagine 47. 2 disulfide bridges follow: cysteine 55–cysteine 146 and cysteine 121–cysteine 138.

It belongs to the snaclec family. Heterodimer of subunits A and B; disulfide-linked. Expressed by the venom gland.

The protein localises to the secreted. Its function is as follows. EMS16 is a potent and selective inhibitor of alpha-2/beta-1 (ITGA2/ITGB1) integrin and acts as a potent antagonist of platelet aggregation and cell migration. Binds specifically to the I domain of the alpha-2 subunit, in a metal ion-independent fashion. The protein is Snaclec EMS16 subunit beta of Echis multisquamatus (Central Asian sand viper).